The following is a 138-amino-acid chain: ATP synthase epsilon chain (138 aa).

It belongs to the ATPase epsilon chain family. F-type ATPases have 2 components, CF(1) - the catalytic core - and CF(0) - the membrane proton channel. CF(1) has five subunits: alpha(3), beta(3), gamma(1), delta(1), epsilon(1). CF(0) has three main subunits: a, b and c.

It is found in the cell inner membrane. Its function is as follows. Produces ATP from ADP in the presence of a proton gradient across the membrane. The sequence is that of ATP synthase epsilon chain from Ruthia magnifica subsp. Calyptogena magnifica.